The primary structure comprises 392 residues: GPI alpha-1,4-mannosyltransferase I, catalytic subunit (392 aa).

The Cytoplasmic portion of the chain corresponds to 1–4; the sequence is MEAR. A helical membrane pass occupies residues 5 to 25; it reads VCVLFGAAALLRLLLLCVGVY. Residues 26 to 65 are Lumenal-facing; it reads QDQTLKLKYTDVDYHVFTDAARFITQGESPYRRSTFRYTP. A helical transmembrane segment spans residues 66–86; the sequence is LLALLLVPNVYLSLLFGKLLF. Over 87–125 the chain is Cytoplasmic; that stretch reads GFCDLLSGLLMFRLLVLRGASHGSACVSCGLWLLNPLPM. The helical transmembrane segment at 126–148 threads the bilayer; that stretch reads AVSTRGNAESVLAVLVLSTLLCL. Topologically, residues 149–156 are lumenal; the sequence is QLRKHTTA. The chain crosses the membrane as a helical span at residues 157–177; it reads ALLFGLSVHMKIYPVTYALPI. Topologically, residues 178-198 are cytoplasmic; sequence ALALTAAPARGRGVLLRFFSP. The helical transmembrane segment at 199-219 threads the bilayer; that stretch reads ALLRFAAVSAAVFLSLGLIFY. The Lumenal portion of the chain corresponds to 220-261; that stretch reads CRYGWEFLQEAYLYHLTRRDLRHNFSPFFYLQYVCAERCWSS. The helical transmembrane segment at 262–282 threads the bilayer; that stretch reads GLLPLLLLPQLLLLLLASAAF. The Cytoplasmic portion of the chain corresponds to 283–302; the sequence is SSDLPFCCFLHTAVFVSFNR. The helical transmembrane segment at 303–323 threads the bilayer; that stretch reads VCTSQYFLWYLCLLPVVLPRL. At 324–330 the chain is on the lumenal side; the sequence is RLRLGRG. The chain crosses the membrane as a helical span at residues 331 to 351; that stretch reads LLLLLLWLLLQGLWLAPAYLL. Topologically, residues 352–360 are cytoplasmic; it reads EFQGWNSFS. A helical transmembrane segment spans residues 361 to 381; the sequence is WIWAASLLFLLTNTFILAQII. The Lumenal portion of the chain corresponds to 382–392; sequence QHYRPHDRKAD.

The protein belongs to the PIGM family. As to quaternary structure, part of the glycosylphosphatidylinositol-mannosyltransferase I complex that is composed of PIGM and PIGX.

It localises to the endoplasmic reticulum membrane. The protein operates within glycolipid biosynthesis; glycosylphosphatidylinositol-anchor biosynthesis. In terms of biological role, catalytic subunit of the glycosylphosphatidylinositol-mannosyltransferase I complex which catalyzes the transfer of the first mannose, via an alpha-1,4 bond from a dolichol-phosphate-mannose (Dol-P-Man) to the glucosaminyl acyl phosphatidylinositol (GlcN-(acyl)PI) intermediate to generate alpha-D-Man-(1-&gt;4)-alpha-D-GlcN-(1-&gt;6)-(1-radyl,2-acyl-sn-glycero-3-phospho)-2-acyl-inositol and participates in the sixth step of the glycosylphosphatidylinositol-anchor biosynthesis. The polypeptide is GPI alpha-1,4-mannosyltransferase I, catalytic subunit (Danio rerio (Zebrafish)).